Reading from the N-terminus, the 89-residue chain is Small ribosomal subunit protein uS15 (89 aa).

It belongs to the universal ribosomal protein uS15 family. In terms of assembly, part of the 30S ribosomal subunit. Forms a bridge to the 50S subunit in the 70S ribosome, contacting the 23S rRNA.

In terms of biological role, one of the primary rRNA binding proteins, it binds directly to 16S rRNA where it helps nucleate assembly of the platform of the 30S subunit by binding and bridging several RNA helices of the 16S rRNA. Forms an intersubunit bridge (bridge B4) with the 23S rRNA of the 50S subunit in the ribosome. The sequence is that of Small ribosomal subunit protein uS15 from Nitrosomonas eutropha (strain DSM 101675 / C91 / Nm57).